A 307-amino-acid chain; its full sequence is GTPase Era (307 aa).

An Era-type G domain is found at 14–184; the sequence is HSGFVAIVGK…REQILDILPE (171 aa). The G1 stretch occupies residues 22–29; it reads GKPNVGKS. 22 to 29 serves as a coordination point for GTP; the sequence is GKPNVGKS. The G2 stretch occupies residues 48–52; sequence QTTRR. Residues 69-72 form a G3 region; that stretch reads DTPG. Residues 69–73 and 131–134 each bind GTP; these read DTPGL and NKTD. A G4 region spans residues 131–134; that stretch reads NKTD. The G5 stretch occupies residues 162-164; the sequence is LSA. A KH type-2 domain is found at 215 to 292; the sequence is LREELPYAVA…FLGLEVIVIP (78 aa).

This sequence belongs to the TRAFAC class TrmE-Era-EngA-EngB-Septin-like GTPase superfamily. Era GTPase family. As to quaternary structure, monomer.

The protein resides in the cytoplasm. Its subcellular location is the cell membrane. Functionally, an essential GTPase that binds both GDP and GTP, with rapid nucleotide exchange. Plays a role in 16S rRNA processing and 30S ribosomal subunit biogenesis and possibly also in cell cycle regulation and energy metabolism. This is GTPase Era from Deinococcus deserti (strain DSM 17065 / CIP 109153 / LMG 22923 / VCD115).